A 285-amino-acid polypeptide reads, in one-letter code: Phospholipid phosphatase 1 (285 aa).

Residues 1 to 6 (MFDKTR) are Cytoplasmic-facing. A PDZ-binding; involved in localization to the apical cell membrane motif is present at residues 5–7 (TRL). The chain crosses the membrane as a helical span at residues 7-27 (LPYVALDVLCVLLAGLPFAIL). Topologically, residues 28–53 (TSRHTPFQRGLFCNDESIKYPYKEDT) are extracellular. A helical transmembrane segment spans residues 54 to 74 (IPYPLLGGIIIPFSIIVMIVG). Topologically, residues 75-94 (ETLSVYFNLLHSNSFIRNNY) are cytoplasmic. Residues 95 to 115 (IATIYKAIGTFLFGAAASQSL) form a helical membrane-spanning segment. At 116-164 (TDIAKYSIGRLRPHFLDVCDPDWSKINCSDGYIENYICRGNAQKVKEGR) the chain is on the extracellular side. The interval 120 to 128 (KYSIGRLRP) is phosphatase sequence motif I. N-linked (GlcNAc...) asparagine glycosylation occurs at asparagine 142. A helical membrane pass occupies residues 165–185 (LSFYSGHSSFSMYCMLFVALY). A phosphatase sequence motif II region spans residues 168–171 (YSGH). Catalysis depends on histidine 171, which acts as the Proton donors. Topologically, residues 186-196 (LQARMKGDWAR) are cytoplasmic. The chain crosses the membrane as a helical span at residues 197–216 (LLRPTLQFGLVAVSIYVGLS). The phosphatase sequence motif III stretch occupies residues 216 to 227 (SRVSDYKHHWSD). Residues 217–229 (RVSDYKHHWSDVL) are Extracellular-facing. Histidine 223 (nucleophile) is an active-site residue. A helical transmembrane segment spans residues 230–250 (TGLIQGALVAIVVAVYVSDFF). The Cytoplasmic portion of the chain corresponds to 251 to 285 (KERNSPFKERKEEDSHTTLHETPTTGNHYRNSHQP). A compositionally biased stretch (basic and acidic residues) spans 257–269 (FKERKEEDSHTTL). Residues 257-285 (FKERKEEDSHTTLHETPTTGNHYRNSHQP) are disordered. Polar residues predominate over residues 270 to 285 (HETPTTGNHYRNSHQP).

It belongs to the PA-phosphatase related phosphoesterase family. As to quaternary structure, forms functional homodimers and homooligomers that are not required for substrate recognition and catalytic activity. Can also form heterooligomers with PLPP2 and PLPP3. Post-translationally, N-glycosylated. N-linked sugars are of the complex type. N-glycosylation is not required for the phosphatase activity.

It is found in the cell membrane. Its subcellular location is the apical cell membrane. It localises to the membrane raft. The protein resides in the membrane. The protein localises to the caveola. The enzyme catalyses a 1,2-diacyl-sn-glycero-3-phosphate + H2O = a 1,2-diacyl-sn-glycerol + phosphate. It catalyses the reaction 1,2-dihexadecanoyl-sn-glycero-3-phosphate + H2O = 1,2-dihexadecanoyl-sn-glycerol + phosphate. The catalysed reaction is 1,2-di-(9Z-octadecenoyl)-sn-glycero-3-phosphate + H2O = 1,2-di-(9Z-octadecenoyl)-sn-glycerol + phosphate. It carries out the reaction a monoacyl-sn-glycero-3-phosphate + H2O = a monoacylglycerol + phosphate. The enzyme catalyses (9Z)-octadecenoyl-sn-glycero-3-phosphate + H2O = (9Z-octadecenoyl)-glycerol + phosphate. It catalyses the reaction a 1-acyl-sn-glycero-3-phosphate + H2O = a 1-acyl-sn-glycerol + phosphate. The catalysed reaction is 1-(9Z-octadecenoyl)-sn-glycero-3-phosphate + H2O = 1-(9Z-octadecenoyl)-sn-glycerol + phosphate. It carries out the reaction a 1,2-diacyl-sn-glycerol 3-diphosphate + H2O = a 1,2-diacyl-sn-glycero-3-phosphate + phosphate + H(+). The enzyme catalyses sphing-4-enine 1-phosphate + H2O = sphing-4-enine + phosphate. It catalyses the reaction an N-acylsphing-4-enine 1-phosphate + H2O = an N-acylsphing-4-enine + phosphate. The catalysed reaction is N-(octanoyl)-sphing-4-enine-1-phosphate + H2O = N-octanoylsphing-4-enine + phosphate. It carries out the reaction N-(9Z-octadecenoyl)-ethanolamine phosphate + H2O = N-(9Z-octadecenoyl) ethanolamine + phosphate. The enzyme catalyses 1-hexadecanoyl-2-(9Z-octadecenoyl)-sn-glycero-3-phosphate + H2O = 1-hexadecanoyl-2-(9Z-octadecenoyl)-sn-glycerol + phosphate. The protein operates within lipid metabolism; phospholipid metabolism. Magnesium-independent phospholipid phosphatase. Insensitive to N-ethylmaleimide. Magnesium-independent phospholipid phosphatase of the plasma membrane that catalyzes the dephosphorylation of a variety of glycerolipid and sphingolipid phosphate esters including phosphatidate/PA, lysophosphatidate/LPA, diacylglycerol pyrophosphate/DGPP, sphingosine 1-phosphate/S1P and ceramide 1-phosphate/C1P. Also acts on N-oleoyl ethanolamine phosphate/N-(9Z-octadecenoyl)-ethanolamine phosphate, a potential physiological compound. Through its extracellular phosphatase activity allows both the hydrolysis and the cellular uptake of these bioactive lipid mediators from the milieu, regulating signal transduction in different cellular processes. It is for instance essential for the extracellular hydrolysis of S1P and subsequent conversion into intracellular S1P. Involved in the regulation of inflammation, platelets activation, cell proliferation and migration among other processes. May also have an intracellular activity to regulate phospholipid-mediated signaling pathways. This chain is Phospholipid phosphatase 1, found in Sus scrofa (Pig).